A 293-amino-acid chain; its full sequence is Insulin-like growth factor-binding protein 3 (293 aa).

A signal peptide spans 1 to 27 (MQRARPALWAAALIALALLRGPPAARA). One can recognise an IGFBP N-terminal domain in the interval 36 to 119 (PVVRCEPCDA…LDGRGICANA (84 aa)). Cystine bridges form between cysteine 40/cysteine 69, cysteine 43/cysteine 71, cysteine 51/cysteine 72, cysteine 60/cysteine 75, cysteine 83/cysteine 96, and cysteine 90/cysteine 116. N-linked (GlcNAc...) asparagine glycosylation is found at asparagine 118 and asparagine 138. Disordered regions lie at residues 132-166 (APPA…PDSK) and 178-213 (KKGH…TEYG). A Phosphoserine modification is found at serine 150. Over residues 178–192 (KKGHAKDSQRYKVDY) the composition is skewed to basic and acidic residues. Polar residues predominate over residues 193 to 204 (ESQSTDTQNFSS). Asparagine 201 carries N-linked (GlcNAc...) asparagine glycosylation. Serine 203 is subject to Phosphoserine. The region spanning 212-287 (YGPCRREMED…DVKGKGDVHC (76 aa)) is the Thyroglobulin type-1 domain. 3 cysteine pairs are disulfide-bonded: cysteine 215/cysteine 242, cysteine 253/cysteine 264, and cysteine 266/cysteine 287.

Interacts with XLKD1. Binds IGF2 more than IGF1. Forms a ternary complex of about 140 to 150 kDa with IGF1 or IGF2 and a 85 kDa glycoprotein (ALS). Interacts with humanin; humanin competes with importin KPNB1 for binding to IGFBP3, blocking IGFBP3 nuclear import and IGFBP3-mediated apoptosis. Interacts with TMEM219. Interacts with RXRA; this interaction modulates the transcriptional activity of RXRA. Interacts with LRP1; this interaction mediates cell growth inhibition independent of IGF1. Phosphorylated by FAM20C in the extracellular medium. Phosphorylated by CK2; resulting in decreased nuclear localization.

It is found in the secreted. It localises to the nucleus. In terms of biological role, multifunctional protein that plays a critical role in regulating the availability of IGFs such as IGF1 and IGF2 to their receptors and thereby regulates IGF-mediated cellular processes including proliferation, differentiation, and apoptosis in a cell-type specific manner. Also exhibits IGF-independent antiproliferative and apoptotic effects mediated by its receptor TMEM219/IGFBP-3R. Inhibits the positive effect of humanin on insulin sensitivity. Promotes testicular germ cell apoptosis. Acts via LRP-1/alpha2M receptor, also known as TGF-beta type V receptor, to mediate cell growth inhibition independent of IGF1. Mechanistically, induces serine-specific dephosphorylation of IRS1 or IRS2 upon ligation to its receptor, leading to the inhibitory cascade. In the nucleus, interacts with transcription factors such as retinoid X receptor-alpha/RXRA to regulate transcriptional signaling and apoptosis. This Sus scrofa (Pig) protein is Insulin-like growth factor-binding protein 3 (IGFBP3).